The following is a 122-amino-acid chain: Large ribosomal subunit protein bL12 (122 aa).

Belongs to the bacterial ribosomal protein bL12 family. In terms of assembly, homodimer. Part of the ribosomal stalk of the 50S ribosomal subunit. Forms a multimeric L10(L12)X complex, where L10 forms an elongated spine to which 2 to 4 L12 dimers bind in a sequential fashion. Binds GTP-bound translation factors.

Its function is as follows. Forms part of the ribosomal stalk which helps the ribosome interact with GTP-bound translation factors. Is thus essential for accurate translation. The sequence is that of Large ribosomal subunit protein bL12 from Buchnera aphidicola subsp. Schizaphis graminum (strain Sg).